The primary structure comprises 624 residues: MAIRQLPEILINQIAAGEVVERPASVVKELVENALDAGATRVDIDLEEGGVRLIRIRDNGGGIAPEELPLAVSRHATSKIASLDDLETVATLGFRGEALPSIASVSRFTLASRRPDAEHGSALQIEGGRLGEVMPRAHAPGTTVEVRELFFNVPARRKFLRAERTELGHIEEWLRSLALARPDVELRVSHNGKPSRRYKPGDLYSDARLGETLGEDFARQALRVDHSGAGLRLHGWVAQPHYSRASTDQQYLYVNGRSVRDRSVAHAVKMAYGDVLFHGRQPAYVLFLELDPARVDVNVHPAKHEVRFREARLIHDFVYRTLQDALAQTRAGALPADVGVGGAAALGIGAVAAQGGGSYVADAGAGHPGAGSGSGYASWAPSQAPLGLRVDEARAAYAALYAPAAGSALRDDGQPVLSGTGLPATAHDSGVPPLGYAVAQLHGIYILAENAEGLIVVDMHAAHERIGYERLKQAHDSIGLHAQPLLVPMTLAVGEREADTAEREADTLASLGFEITRSGPQSLHVRSIPALLANADPEALLRDVLGDLREHGQSRRIATARDELLSTMACHGAVRANRRLTVPEMNALLRDMEATERSGQCNHGRPTWARFTLGEIDRWFLRGR.

The protein belongs to the DNA mismatch repair MutL/HexB family.

In terms of biological role, this protein is involved in the repair of mismatches in DNA. It is required for dam-dependent methyl-directed DNA mismatch repair. May act as a 'molecular matchmaker', a protein that promotes the formation of a stable complex between two or more DNA-binding proteins in an ATP-dependent manner without itself being part of a final effector complex. The polypeptide is DNA mismatch repair protein MutL (Xanthomonas campestris pv. campestris (strain B100)).